Here is a 540-residue protein sequence, read N- to C-terminus: Signal peptide peptidase-like 3 (540 aa).

Residues 1–28 (MSSFDPPNHRYSALVLILLLLGFSVAAA) form the signal peptide. The Lumenal segment spans residues 29-194 (DDVSWTEDSS…LYAPKRPAVD (166 aa)). The 75-residue stretch at 98 to 172 (SHLSSRLDGH…ISKSSGDALN (75 aa)) folds into the PA domain. Residues asparagine 155 and asparagine 172 are each glycosylated (N-linked (GlcNAc...) asparagine). The chain crosses the membrane as a helical span at residues 195-215 (LTAGLLLLMAVGTVVVASLWS). Residues 216-250 (ELTDPDQANESYSILAKDVSSAGTRKDDPEKEILD) lie on the Cytoplasmic side of the membrane. Residues 251–273 (ISVTGAVFFIVTASIFLLLLFYF) traverse the membrane as a helical segment. Over 274-276 (MSS) the chain is Lumenal. The chain crosses the membrane as a helical span at residues 277-299 (WFVWVLTIFFCIGGMQGMHNIIM). Topologically, residues 300–321 (AVILRKCRHLARKSVKLPLLGT) are cytoplasmic. A helical transmembrane segment spans residues 322-342 (MSVLSLLVNIVCLAFAVFWFI). Over 343–347 (KRHTS) the chain is Lumenal. The chain crosses the membrane as a helical span at residues 348-368 (YSWVGQDILGICLMITALQVV). Topologically, residues 369 to 377 (RLPNIKVAT) are cytoplasmic. The helical transmembrane segment at 378–398 (VLLCCAFVYDIFWVFISPLIF) threads the bilayer. Aspartate 387 is an active-site residue. The Lumenal segment spans residues 399-429 (HESVMIVVAQGDSSTGESIPMLLRIPRFFDP). Residues 430-450 (WGGYDMIGFGDILFPGLLISF) form a helical membrane-spanning segment. Aspartate 440 is an active-site residue. At 451 to 466 (ASRYDKIKKRVISNGY) the chain is on the cytoplasmic side. The chain crosses the membrane as a helical span at residues 467-487 (FLWLTIGYGIGLLLTYLGLYL). The Lumenal segment spans residues 488–492 (MDGHG). A helical membrane pass occupies residues 493 to 513 (QPALLYIVPCTLGLAVILGLV). The PAL motif lies at 494-496 (PAL). The Cytoplasmic segment spans residues 514-540 (RGELKELWNYGIEESESHTPEDPMPVA).

This sequence belongs to the peptidase A22B family. In terms of processing, glycosylated. As to expression, ubiquitous.

The protein localises to the endosome membrane. In terms of biological role, intramembrane-cleaving aspartic protease (I-CLiP) that cleaves type II membrane signal peptides in the hydrophobic plane of the membrane. The sequence is that of Signal peptide peptidase-like 3 (SPPL3) from Arabidopsis thaliana (Mouse-ear cress).